The chain runs to 497 residues: Lysophospholipid acyltransferase 5 (497 aa).

Transmembrane regions (helical) follow at residues Leu-31–Ile-51, Gly-74–Leu-94, Ile-100–Thr-120, Leu-173–Phe-193, Ala-213–Leu-235, and Ser-264–Tyr-286. Active-site residues include Asn-322 and His-358. The helical transmembrane segment at Phe-339–His-361 threads the bilayer. Asn-398 carries N-linked (GlcNAc...) asparagine glycosylation. A run of 2 helical transmembrane segments spans residues Phe-408–Phe-428 and Ile-435–Phe-455. A disordered region spans residues Lys-469–Glu-497. Basic and acidic residues predominate over residues Leu-470 to Glu-497. Ser-480 is subject to Phosphoserine.

This sequence belongs to the membrane-bound acyltransferase family. As to expression, during gastrulation, expressed mainly along the midline in the presumptive mesoderm. During germ band elongation, expressed in mesoderm and endoderm primordia and in the cephalic furrow. Expression in mesoderm and endoderm lineages continues during germ band shortening. At the end of this process, no longer detected in somatic mesoderm or endoderm layer with expression restricted to anterior and posterior domains of the visceral mesoderm.

It is found in the endoplasmic reticulum. Its subcellular location is the membrane. The catalysed reaction is a 1-acyl-sn-glycero-3-phospho-L-serine + an acyl-CoA = a 1,2-diacyl-sn-glycero-3-phospho-L-serine + CoA. The enzyme catalyses 1-(9Z-octadecenoyl)-sn-glycero-3-phospho-L-serine + (9Z)-hexadecenoyl-CoA = 1-(9Z-octadecenoyl)-2-(9Z-hexadecenoyl)-sn-glycero-3-phospho-L-serine + CoA. It catalyses the reaction a 1-acyl-sn-glycero-3-phosphocholine + an acyl-CoA = a 1,2-diacyl-sn-glycero-3-phosphocholine + CoA. It carries out the reaction 1-hexadecanoyl-sn-glycero-3-phosphocholine + (9Z)-octadecenoyl-CoA = 1-hexadecanoyl-2-(9Z-octadecenoyl)-sn-glycero-3-phosphocholine + CoA. The catalysed reaction is (9Z,12Z)-octadecadienoyl-CoA + 1-hexadecanoyl-sn-glycero-3-phosphocholine = 1-hexadecanoyl-2-(9Z,12Z-octadecadienoyl)-sn-glycero-3-phosphocholine + CoA. The enzyme catalyses (5Z,8Z,11Z,14Z)-eicosatetraenoyl-CoA + 1-hexadecanoyl-sn-glycero-3-phosphocholine = 1-hexadecanoyl-2-(5Z,8Z,11Z,14Z-eicosatetraenoyl)-sn-glycero-3-phosphocholine + CoA. It catalyses the reaction (9Z)-hexadecenoyl-CoA + 1-hexadecanoyl-sn-glycero-3-phosphocholine = 1-hexadecanoyl-2-(9Z-hexadecenoyl)-sn-glycero-3-phosphocholine + CoA. It participates in lipid metabolism; phospholipid metabolism. Acyltransferase that mediates the acylation of lysophospholipids to produce phospholipids (glycerophospholipids). Highest activity with lysophosphatidylcholine (1-acyl-sn-glycero-3-phosphocholine or LPC) producing phosphatidylcholine (1,2-diacyl-sn-glycero-3-phosphocholine or PC) (LPCAT activity), but also converts lysophosphatidylserine (1-acyl-2-hydroxy-sn-glycero-3-phospho-L-serine or LPS) to phosphatidylserine (1,2-diacyl-sn-glycero-3-phospho-L-serine or PS) (LPSAT activity). Has a preference for unsaturated fatty acids of at least 16 carbons such as oleoyl-CoA ((9Z)-octadecenoyl-CoA) and palmitoleoyl-CoA ((9Z)-hexadecenoyl-CoA). Glycerophospholipids are important structural and functional components of cellular membrane, acyl-chain remodeling regulates the molecular species distribution of glycerophospholipids which can affect membrane fluidity and curvature. Essential for fertility and viability together with Oysgedart (Oys). Required for germ cells to migrate into the mesoderm. This chain is Lysophospholipid acyltransferase 5, found in Drosophila melanogaster (Fruit fly).